Consider the following 424-residue polypeptide: ATP-sensitive inward rectifier potassium channel 8 (424 aa).

Over 1–69 (MLARKSIIPE…IFTTLVDLKW (69 aa)) the chain is Cytoplasmic. Serine 6 is subject to Phosphoserine. The helical transmembrane segment at 70–94 (RHTLVIFTMSFLCSWLLFAIMWWLV) threads the bilayer. Residues 95-126 (AFAHGDIYAYMEKGITEKSGLESAVCVTNVRS) lie on the Extracellular side of the membrane. The helical; Pore-forming intramembrane region spans 127 to 138 (FTSAFLFSIEVQ). The segment at residues 139–145 (VTIGFGG) is an intramembrane region (pore-forming). The Selectivity filter signature appears at 140 to 145 (TIGFGG). Residues 146-154 (RMMTEECPL) are Extracellular-facing. Residues 155-176 (AITVLILQNIVGLIINAVMLGC) traverse the membrane as a helical segment. The Cytoplasmic segment spans residues 177–424 (IFMKTAQAHR…PEGNQCPSES (248 aa)). A disordered region spans residues 374–424 (LSHQNSLRKRNSMRRNNSMRRSNSIRRNNSSLMVPKVQFMTPEGNQCPSES). Positions 387–404 (RRNNSMRRSNSIRRNNSS) are enriched in low complexity.

Belongs to the inward rectifier-type potassium channel (TC 1.A.2.1) family. KCNJ8 subfamily. In terms of assembly, interacts with ABCC9. As to expression, widely expressed, including in pancreatic islets, pituitary, skeletal muscle and heart.

The protein localises to the membrane. The enzyme catalyses K(+)(in) = K(+)(out). Functionally, inward rectifier potassium channels are characterized by a greater tendency to allow potassium to flow into the cell rather than out of it. Their voltage dependence is regulated by the concentration of extracellular potassium; as external potassium is raised, the voltage range of the channel opening shifts to more positive voltages. The inward rectification is mainly due to the blockage of outward current by internal magnesium. This channel is activated by internal ATP and can be blocked by external barium. Can form a sulfonyllurea-sensitive but ATP-insensitive potassium channel with ABCC9. This is ATP-sensitive inward rectifier potassium channel 8 (Kcnj8) from Rattus norvegicus (Rat).